Consider the following 338-residue polypeptide: Ketol-acid reductoisomerase (NADP(+)) (338 aa).

In terms of domain architecture, KARI N-terminal Rossmann spans 1–181 (MKVFYDKDCD…GGGRTGIIET (181 aa)). NADP(+)-binding positions include 24–27 (YGSQ), R47, S50, T52, and 82–85 (DEFQ). Residue H107 is part of the active site. Position 133 (G133) interacts with NADP(+). The region spanning 182 to 327 (TFKDETETDL…EQLRSMMPWI (146 aa)) is the KARI C-terminal knotted domain. Residues D190, E194, E226, and E230 each contribute to the Mg(2+) site. Position 251 (S251) interacts with substrate.

The protein belongs to the ketol-acid reductoisomerase family. Mg(2+) is required as a cofactor.

It carries out the reaction (2R)-2,3-dihydroxy-3-methylbutanoate + NADP(+) = (2S)-2-acetolactate + NADPH + H(+). The enzyme catalyses (2R,3R)-2,3-dihydroxy-3-methylpentanoate + NADP(+) = (S)-2-ethyl-2-hydroxy-3-oxobutanoate + NADPH + H(+). Its pathway is amino-acid biosynthesis; L-isoleucine biosynthesis; L-isoleucine from 2-oxobutanoate: step 2/4. It participates in amino-acid biosynthesis; L-valine biosynthesis; L-valine from pyruvate: step 2/4. Its function is as follows. Involved in the biosynthesis of branched-chain amino acids (BCAA). Catalyzes an alkyl-migration followed by a ketol-acid reduction of (S)-2-acetolactate (S2AL) to yield (R)-2,3-dihydroxy-isovalerate. In the isomerase reaction, S2AL is rearranged via a Mg-dependent methyl migration to produce 3-hydroxy-3-methyl-2-ketobutyrate (HMKB). In the reductase reaction, this 2-ketoacid undergoes a metal-dependent reduction by NADPH to yield (R)-2,3-dihydroxy-isovalerate. This is Ketol-acid reductoisomerase (NADP(+)) from Pseudomonas entomophila (strain L48).